Consider the following 305-residue polypeptide: Serine/threonine-protein phosphatase 6 catalytic subunit (305 aa).

4 residues coordinate Mn(2+): Asp54, His56, Asp82, and Asn114. The active-site Proton donor is His115. Residues His164 and His238 each contribute to the Mn(2+) site.

The protein belongs to the PPP phosphatase family. PP-6 (PP-V) subfamily. Requires Mn(2+) as cofactor.

The catalysed reaction is O-phospho-L-seryl-[protein] + H2O = L-seryl-[protein] + phosphate. It catalyses the reaction O-phospho-L-threonyl-[protein] + H2O = L-threonyl-[protein] + phosphate. The polypeptide is Serine/threonine-protein phosphatase 6 catalytic subunit (ppp6c) (Dictyostelium discoideum (Social amoeba)).